Reading from the N-terminus, the 155-residue chain is Ferredoxin-6, chloroplastic (155 aa).

Residues M1–A58 constitute a chloroplast transit peptide. The 2Fe-2S ferredoxin-type domain occupies H61 to E152. [2Fe-2S] cluster contacts are provided by C98, C103, C106, and C136.

Belongs to the 2Fe2S plant-type ferredoxin family. [2Fe-2S] cluster is required as a cofactor.

It localises to the plastid. Its subcellular location is the chloroplast. Functionally, ferredoxins are iron-sulfur proteins that transfer electrons in a wide variety of metabolic reactions. This Zea mays (Maize) protein is Ferredoxin-6, chloroplastic (FDX6).